An 81-amino-acid chain; its full sequence is ATP synthase subunit c (81 aa).

Helical transmembrane passes span 7-27 (AASV…PGIG) and 57-77 (LAFM…LLFA).

The protein belongs to the ATPase C chain family. F-type ATPases have 2 components, F(1) - the catalytic core - and F(0) - the membrane proton channel. F(1) has five subunits: alpha(3), beta(3), gamma(1), delta(1), epsilon(1). F(0) has four main subunits: a(1), b(1), b'(1) and c(10-14). The alpha and beta chains form an alternating ring which encloses part of the gamma chain. F(1) is attached to F(0) by a central stalk formed by the gamma and epsilon chains, while a peripheral stalk is formed by the delta, b and b' chains.

Its subcellular location is the cellular thylakoid membrane. F(1)F(0) ATP synthase produces ATP from ADP in the presence of a proton or sodium gradient. F-type ATPases consist of two structural domains, F(1) containing the extramembraneous catalytic core and F(0) containing the membrane proton channel, linked together by a central stalk and a peripheral stalk. During catalysis, ATP synthesis in the catalytic domain of F(1) is coupled via a rotary mechanism of the central stalk subunits to proton translocation. In terms of biological role, key component of the F(0) channel; it plays a direct role in translocation across the membrane. A homomeric c-ring of between 10-14 subunits forms the central stalk rotor element with the F(1) delta and epsilon subunits. The chain is ATP synthase subunit c from Synechococcus sp. (strain CC9902).